The sequence spans 1319 residues: Girdin homolog (1319 aa).

One can recognise a Calponin-homology (CH) domain in the interval Glu6–Ala118. 3 coiled-coil regions span residues Glu141 to Val173, Thr218 to Ile690, and Lys732 to Thr1096. Residues Lys166 to Arg222 are disordered. The segment covering Gln204–Arg222 has biased composition (polar residues). Disordered regions lie at residues Ile1112–His1236 and Asn1289–Asn1308. A compositionally biased stretch (polar residues) spans Thr1118–Tyr1131.

The protein belongs to the CCDC88 family. As to expression, expressed in AQR and PQR gas-sensing neurons in hermaphrodites (at protein level).

It localises to the cytoplasm. Its subcellular location is the cytoskeleton. The protein resides in the cilium basal body. It is found in the microtubule organizing center. The protein localises to the centrosome. It localises to the centriole. In terms of biological role, scaffolding protein that plays a role in ciliogenesis, cilium positioning and dendrite anchoring in sensory amphid neurons including AWB, AWA, AWC, ADL and ASI, the phasmid neurons PHA and PHB and the gas sensing neurons AQR, PQR, URX and BAG. Its role in cilium positioning may be through regulation of the localization of cell adhesion proteins such as the apical junction protein ajm-1, and the ciliary scaffolding protein Rootletin/che-10. Plays a more prominent role in regulating dendrite morphogenesis in AQR than in PQR neurons. Regulates localization of hmr-1 to the distal AQR dendrite. During embryonic elongation, required for the anchoring of URX and BAG dendrites to the presumptive nose. The protein is Girdin homolog of Caenorhabditis elegans.